Reading from the N-terminus, the 403-residue chain is Argininosuccinate synthase (403 aa).

Residues 10–18 and Ala-38 each bind ATP; that span reads AYSGGVDTS. Position 89 (Tyr-89) interacts with L-citrulline. Gly-119 is an ATP binding site. L-aspartate contacts are provided by Thr-121, Asn-125, and Asp-126. Asn-125 serves as a coordination point for L-citrulline. Residues Arg-129, Ser-177, Ser-186, Glu-262, and Tyr-274 each contribute to the L-citrulline site.

The protein belongs to the argininosuccinate synthase family. Type 1 subfamily. As to quaternary structure, homotetramer.

The protein resides in the cytoplasm. The enzyme catalyses L-citrulline + L-aspartate + ATP = 2-(N(omega)-L-arginino)succinate + AMP + diphosphate + H(+). It functions in the pathway amino-acid biosynthesis; L-arginine biosynthesis; L-arginine from L-ornithine and carbamoyl phosphate: step 2/3. In Synechococcus sp. (strain CC9902), this protein is Argininosuccinate synthase.